Here is a 505-residue protein sequence, read N- to C-terminus: AMP phosphorylase (505 aa).

Residues glycine 170, 196–201 (SRAITS), and threonine 205 contribute to the AMP site. The Proton donor role is filled by aspartate 258. The AMP site is built by serine 266 and lysine 290.

It belongs to the thymidine/pyrimidine-nucleoside phosphorylase family. Type 2 subfamily.

The catalysed reaction is AMP + phosphate = alpha-D-ribose 1,5-bisphosphate + adenine. The enzyme catalyses CMP + phosphate = cytosine + alpha-D-ribose 1,5-bisphosphate. It catalyses the reaction UMP + phosphate = alpha-D-ribose 1,5-bisphosphate + uracil. Catalyzes the conversion of AMP and phosphate to adenine and ribose 1,5-bisphosphate (R15P). Exhibits phosphorylase activity toward CMP and UMP in addition to AMP. Functions in an archaeal AMP degradation pathway, together with R15P isomerase and RubisCO. This is AMP phosphorylase from Methanococcus vannielii (strain ATCC 35089 / DSM 1224 / JCM 13029 / OCM 148 / SB).